Reading from the N-terminus, the 226-residue chain is Ribonuclease 3 (226 aa).

An RNase III domain is found at 6 to 128; it reads TNRLQKKLGY…LIGGVFLDSD (123 aa). Mg(2+) is bound at residue E41. Residue D45 is part of the active site. The Mg(2+) site is built by D114 and E117. E117 is a catalytic residue. One can recognise a DRBM domain in the interval 155–225; it reads DPKTRLQEYL…AEQALKLLEL (71 aa).

It belongs to the ribonuclease III family. In terms of assembly, homodimer. Requires Mg(2+) as cofactor.

It localises to the cytoplasm. The enzyme catalyses Endonucleolytic cleavage to 5'-phosphomonoester.. Functionally, digests double-stranded RNA. Involved in the processing of primary rRNA transcript to yield the immediate precursors to the large and small rRNAs (23S and 16S). Processes some mRNAs, and tRNAs when they are encoded in the rRNA operon. Processes pre-crRNA and tracrRNA of type II CRISPR loci if present in the organism. The sequence is that of Ribonuclease 3 from Sodalis glossinidius (strain morsitans).